The chain runs to 182 residues: uncharacterized protein (182 aa).

The protein belongs to the DNA 3' phosphatase family.

This is an uncharacterized protein from Autographa californica nuclear polyhedrosis virus (AcMNPV).